The primary structure comprises 741 residues: MDHVEETEILAATQRYYVERPIFSHPVLQERLHKKDKISESIGDKLKQAFTCTPKKIRNIIYMFLPITKWLPAYRFKEYVLGDIVSGISTGVLQLPQGLAFAMLAAVPPVFGLYSSFYPVIMYCFFGTSRHISIGPFAVISLMIGGVAVRLVPDDIVIPGGVNATNSTEARDALRVKVAMSVTLLTGIIQFCLGVCRFGFVAIYLTEPLVRGFTTAAAVHVFTSMLKYLFGVKTKRYSGIFSVVYSTVAVLQNVKNLNVCSLGVGLMVFGLLLGGKEFNERFKEKLPAPIPLEFFAVVMGTGISAGFSLHESYNVDVVGTLPLGLLPPANPDTSLFHLVYVDAIAIAIVGFSVTISMAKTLANKHGYQVDGNQELIALGLCNSTGSLFQTFAISCSLSRSLVQEGTGGKTQLAGCLASLMILLVILATGFLFESLPQAVLSAIVIVNLKGMFMQFSDLPFFWRTSKIELTIWLTTFVSSLFLGLDYGLITAVIIALMTVIYRTQSPSYIVLGQLPDTDVYIDIDAYEEVKEVPGIKIFQINAPIYYANSDLYSSALKRKTGVNPAFILGARRKAMKKYAKEVGNANMANATVVKVDAEVDAEDGTKPEEEEDEIKYPPIVTKSTLPEELQRFMPPGDNVHTIILDFTQVNFMDSVGVKTLAGIVKEYGDVGIYVYLAGCSAQVVSDLTQNQFFENPALLDLLFHSIHDAVLGSQVREALAEQEATAAPPQEDSEPNATPEA.

At 1 to 79 (MDHVEETEIL…WLPAYRFKEY (79 aa)) the chain is on the cytoplasmic side. The chain crosses the membrane as a helical span at residues 80–105 (VLGDIVSGISTGVLQLPQGLAFAMLA). Topologically, residues 106–109 (AVPP) are extracellular. Residues 110–125 (VFGLYSSFYPVIMYCF) traverse the membrane as a helical segment. Residues 126 to 137 (FGTSRHISIGPF) are Cytoplasmic-facing. A helical transmembrane segment spans residues 138 to 147 (AVISLMIGGV). At 148 to 178 (AVRLVPDDIVIPGGVNATNSTEARDALRVKV) the chain is on the extracellular side. An Involved in motor function motif is present at residues 158-168 (IPGGVNATNST). Residues Asn-163 and Asn-166 are each glycosylated (N-linked (GlcNAc...) asparagine). 2 consecutive transmembrane segments (helical) span residues 179–208 (AMSV…LTEP) and 209–230 (LVRG…KYLF). At 231–243 (GVKTKRYSGIFSV) the chain is on the extracellular side. The segment at residues 244–248 (VYSTV) is an intramembrane region (helical). The Extracellular segment spans residues 249-261 (AVLQNVKNLNVCS). Residues 262 to 283 (LGVGLMVFGLLLGGKEFNERFK) traverse the membrane as a helical segment. At 284–291 (EKLPAPIP) the chain is on the cytoplasmic side. The chain crosses the membrane as a helical span at residues 292–303 (LEFFAVVMGTGI). Over 304-338 (SAGFSLHESYNVDVVGTLPLGLLPPANPDTSLFHL) the chain is Extracellular. The chain crosses the membrane as a helical span at residues 339 to 361 (VYVDAIAIAIVGFSVTISMAKTL). At 362–370 (ANKHGYQVD) the chain is on the cytoplasmic side. The chain crosses the membrane as a helical span at residues 371–388 (GNQELIALGLCNSTGSLF). At 389–396 (QTFAISCS) the chain is on the extracellular side. Residues 397–406 (LSRSLVQEGT) form a helical membrane-spanning segment. A salicylate-binding site is contributed by Ser-398. At 407 to 410 (GGKT) the chain is on the cytoplasmic side. The helical transmembrane segment at 411–429 (QLAGCLASLMILLVILATG) threads the bilayer. At 430 to 436 (FLFESLP) the chain is on the extracellular side. Residues 437 to 459 (QAVLSAIVIVNLKGMFMQFSDLP) traverse the membrane as a helical segment. Residues 460–467 (FFWRTSKI) are Cytoplasmic-facing. A helical membrane pass occupies residues 468-483 (ELTIWLTTFVSSLFLG). A topological domain (extracellular) is located at residue Leu-484. The helical transmembrane segment at 485–498 (DYGLITAVIIALMT) threads the bilayer. Over 499-741 (VIYRTQSPSY…DSEPNATPEA (243 aa)) the chain is Cytoplasmic. The extended region for STAS domain stretch occupies residues 505 to 718 (SPSYIVLGQL…AVLGSQVREA (214 aa)). The STAS domain maps to 525-713 (AYEEVKEVPG…HSIHDAVLGS (189 aa)). Residues 718-741 (ALAEQEATAAPPQEDSEPNATPEA) are disordered. Low complexity predominate over residues 721–730 (EQEATAAPPQ).

Belongs to the SLC26A/SulP transporter (TC 2.A.53) family. Homodimer. Interacts (via STAS domain) with CALM; this interaction is calcium-dependent and the STAS domain interacts with only one lobe of CALM which is an elongated conformation.

The protein resides in the cell membrane. The enzyme catalyses 2 hydrogencarbonate(in) + chloride(out) = 2 hydrogencarbonate(out) + chloride(in). Its function is as follows. Voltage-sensitive motor protein that drives outer hair cell (OHC) electromotility (eM) and participates in sound amplification in the hearing organ. Converts changes in the transmembrane electric potential into mechanical displacements resulting in the coupling of its expansion to movement of a charged voltage sensor across the lipid membrane. The nature of the voltage sensor is not completely clear, and two models compete. In the first model, acts as an incomplete transporter where intracellular chloride anion acts as extrinsic voltage sensor that drives conformational change in the protein which is sufficient to produce a length change in the plane of the membrane and hence in the length of the OHC. The second model in which multiple charged amino acid residues are distributed at the intracellular and extracellular membrane interfaces that form an intrinsic voltage sensor, whose movement produces the non-linear capacitance (NLC). However, the effective voltage sensor may be the result of a hybrid voltage sensor assembled from intrinsic charge (charged residues) and extrinsic charge (bound anion). Notably, binding of anions to the anion-binding pocket partially neutralizes the intrinsic positive charge rather than to form an electrically negative sensor, therefore remaining charge may serve as voltage sensor that, after depolarization, moves from down (expanded state) to up (contracted) conformation, which is accompanied by an eccentric contraction of the intermembrane cross-sectional area of the protein as well as a major increase in the hydrophobic thickness of the protein having as consequences the plasma membrane thickening and the cell contraction after membrane depolarization. The anion-binding pocket transits from the inward-open (Down) state, where it is exposed toward the intracellular solvent in the absence of anion, to the occluded (Up) state upon anion binding. Salicylate competes for the anion-binding site and inhibits the voltage-sensor movement, and therefore inhibits the charge transfer and electromotility by displacing Cl(-) from the anion-binding site and by preventing the structural transitions to the contracted state. In addition, can act as a weak Cl(-)/HCO3 (-) antiporter across the cell membrane and so regulate the intracellular pH of the outer hair cells (OHCs), while firstly found as being unable to mediate electrogenic anion transport. Moreover, supports a role in cardiac mechanical amplification serving as an elastic element to enhance the actomyosin- based sarcomere contraction system. The protein is Prestin of Tursiops truncatus (Atlantic bottle-nosed dolphin).